A 325-amino-acid chain; its full sequence is ATP phosphoribosyltransferase (325 aa).

This sequence belongs to the ATP phosphoribosyltransferase family. Long subfamily. Mg(2+) serves as cofactor.

Its subcellular location is the cytoplasm. It catalyses the reaction 1-(5-phospho-beta-D-ribosyl)-ATP + diphosphate = 5-phospho-alpha-D-ribose 1-diphosphate + ATP. It functions in the pathway amino-acid biosynthesis; L-histidine biosynthesis; L-histidine from 5-phospho-alpha-D-ribose 1-diphosphate: step 1/9. With respect to regulation, feedback inhibited by histidine. In terms of biological role, catalyzes the condensation of ATP and 5-phosphoribose 1-diphosphate to form N'-(5'-phosphoribosyl)-ATP (PR-ATP). Has a crucial role in the pathway because the rate of histidine biosynthesis seems to be controlled primarily by regulation of HisG enzymatic activity. In Afipia carboxidovorans (strain ATCC 49405 / DSM 1227 / KCTC 32145 / OM5) (Oligotropha carboxidovorans), this protein is ATP phosphoribosyltransferase.